Reading from the N-terminus, the 551-residue chain is Glutamate--tRNA ligase (551 aa).

The 'HIGH' region motif lies at 100–110 (PNPNGPPTLGS).

Belongs to the class-I aminoacyl-tRNA synthetase family. Glutamate--tRNA ligase type 2 subfamily.

The protein resides in the cytoplasm. It carries out the reaction tRNA(Glu) + L-glutamate + ATP = L-glutamyl-tRNA(Glu) + AMP + diphosphate. Functionally, catalyzes the attachment of glutamate to tRNA(Glu) in a two-step reaction: glutamate is first activated by ATP to form Glu-AMP and then transferred to the acceptor end of tRNA(Glu). The sequence is that of Glutamate--tRNA ligase from Archaeoglobus fulgidus (strain ATCC 49558 / DSM 4304 / JCM 9628 / NBRC 100126 / VC-16).